We begin with the raw amino-acid sequence, 446 residues long: MSSSVWQERRHGEDKQRRNDHRSPFQRDRARILHSAAFRRLQAKTQVLGVGMNDFYRTRLTHSLEVSQIGTGIAAQLSRKYPEHKPLLGSMSLLESLCLAHDIGHPPFGHGGEVALNYMMRHHGGFEGNGQTFRILSKLEPYTEAFGMNLCRRTMLGILKYPAPQSLLFVPGSHPEITNHRQLKPSQWPPVKGIFDDDSDIFDWVLEPLSVADRARFTSVQPSLQPNYPHLRTQFKSFDCSIMELADDIAYAVHDLEDAIVMGIVTASQWQQDVAPTLKHSGDPWIRQELADIGTKLFSHEHHLRKDAIGTLVNGFVTAIIINDDPAFEEPLLRFNASLEPEFANALNVLKQLVFKYVIRKPEIQMLEYKGQQIVMGLFEAFASDPERLLPLNTQERWRTSELQGQNSHRVLADYISGMTDEFAGRLYQQLFSPKAGSNVELSKEM.

The segment at 1–28 (MSSSVWQERRHGEDKQRRNDHRSPFQRD) is disordered. Over residues 7–28 (QERRHGEDKQRRNDHRSPFQRD) the composition is skewed to basic and acidic residues. The 194-residue stretch at 59–252 (RLTHSLEVSQ…MELADDIAYA (194 aa)) folds into the HD domain.

Belongs to the dGTPase family. Type 2 subfamily.

This chain is Deoxyguanosinetriphosphate triphosphohydrolase-like protein, found in Shewanella sp. (strain MR-4).